The primary structure comprises 371 residues: Anhydro-N-acetylmuramic acid kinase (371 aa).

12–20 (GTVLDGNID) is an ATP binding site.

The protein belongs to the anhydro-N-acetylmuramic acid kinase family.

The enzyme catalyses 1,6-anhydro-N-acetyl-beta-muramate + ATP + H2O = N-acetyl-D-muramate 6-phosphate + ADP + H(+). Its pathway is amino-sugar metabolism; 1,6-anhydro-N-acetylmuramate degradation. It participates in cell wall biogenesis; peptidoglycan recycling. In terms of biological role, catalyzes the specific phosphorylation of 1,6-anhydro-N-acetylmuramic acid (anhMurNAc) with the simultaneous cleavage of the 1,6-anhydro ring, generating MurNAc-6-P. Is required for the utilization of anhMurNAc either imported from the medium or derived from its own cell wall murein, and thus plays a role in cell wall recycling. This is Anhydro-N-acetylmuramic acid kinase from Mesorhizobium japonicum (strain LMG 29417 / CECT 9101 / MAFF 303099) (Mesorhizobium loti (strain MAFF 303099)).